A 241-amino-acid polypeptide reads, in one-letter code: Pyridoxine 5'-phosphate synthase (241 aa).

Asn-7 provides a ligand contact to 3-amino-2-oxopropyl phosphate. 1-deoxy-D-xylulose 5-phosphate is bound at residue 9 to 10 (DH). Position 18 (Arg-18) interacts with 3-amino-2-oxopropyl phosphate. The Proton acceptor role is filled by His-43. Positions 45 and 50 each coordinate 1-deoxy-D-xylulose 5-phosphate. Glu-70 functions as the Proton acceptor in the catalytic mechanism. A 1-deoxy-D-xylulose 5-phosphate-binding site is contributed by Thr-100. His-191 (proton donor) is an active-site residue. 3-amino-2-oxopropyl phosphate-binding positions include Gly-192 and 213–214 (GH).

This sequence belongs to the PNP synthase family. As to quaternary structure, homooctamer; tetramer of dimers.

The protein localises to the cytoplasm. The enzyme catalyses 3-amino-2-oxopropyl phosphate + 1-deoxy-D-xylulose 5-phosphate = pyridoxine 5'-phosphate + phosphate + 2 H2O + H(+). Its pathway is cofactor biosynthesis; pyridoxine 5'-phosphate biosynthesis; pyridoxine 5'-phosphate from D-erythrose 4-phosphate: step 5/5. Functionally, catalyzes the complicated ring closure reaction between the two acyclic compounds 1-deoxy-D-xylulose-5-phosphate (DXP) and 3-amino-2-oxopropyl phosphate (1-amino-acetone-3-phosphate or AAP) to form pyridoxine 5'-phosphate (PNP) and inorganic phosphate. The polypeptide is Pyridoxine 5'-phosphate synthase (Acidithiobacillus ferrooxidans (strain ATCC 23270 / DSM 14882 / CIP 104768 / NCIMB 8455) (Ferrobacillus ferrooxidans (strain ATCC 23270))).